Consider the following 179-residue polypeptide: Large ribosomal subunit protein uL5 (179 aa).

This sequence belongs to the universal ribosomal protein uL5 family. Part of the 50S ribosomal subunit; part of the 5S rRNA/L5/L18/L25 subcomplex. Contacts the 5S rRNA and the P site tRNA. Forms a bridge to the 30S subunit in the 70S ribosome.

Functionally, this is one of the proteins that bind and probably mediate the attachment of the 5S RNA into the large ribosomal subunit, where it forms part of the central protuberance. In the 70S ribosome it contacts protein S13 of the 30S subunit (bridge B1b), connecting the 2 subunits; this bridge is implicated in subunit movement. Contacts the P site tRNA; the 5S rRNA and some of its associated proteins might help stabilize positioning of ribosome-bound tRNAs. This Salmonella arizonae (strain ATCC BAA-731 / CDC346-86 / RSK2980) protein is Large ribosomal subunit protein uL5.